The primary structure comprises 765 residues: Complement factor B (765 aa).

Positions M1 to M25 are cleaved as a signal peptide. 3 consecutive Sushi domains span residues S35 to A100, I101 to D160, and G163 to D220. Cystine bridges form between C37–C76, C62–C98, C103–C145, C131–C158, C165–C205, and C191–C218. 2 N-linked (GlcNAc...) asparagine glycosylation sites follow: N122 and N142. The 200-residue stretch at N270–L469 folds into the VWFA domain. Residues S278 and S280 each contribute to the Mg(2+) site. N285 carries N-linked (GlcNAc...) asparagine glycosylation. T353 serves as a coordination point for Mg(2+). The N-linked (GlcNAc...) asparagine glycan is linked to N378. The region spanning L477 to K758 is the Peptidase S1 domain. 5 disulfides stabilise this stretch: C478–C596, C511–C527, C599–C615, C660–C686, and C699–C729. Residues H526 and D576 each act as charge relay system in the active site. The active-site Charge relay system is S703.

The protein belongs to the peptidase S1 family. As to quaternary structure, monomer. Interacts with complement C3b; this interaction is dependent on the presence of Mg(2+). Catalytic component of the C3 convertase of the alternative complement pathway, also named C3bBb, composed of complement factor B Bb and complement C3b. Catalytic component of the C5 convertase of the alternative complement pathway, also named C3bBb3b, composed of complement factor B Bb and additional molecules of complement C3b. Interacts to CFP; this interaction contributes to the stabilization of the active C3-convertase enzyme complex. It depends on Mg(2+) as a cofactor. Mn(2+) serves as cofactor. Post-translationally, cleaved by CFD following activation of the alternative complement system, generating Ba and Bb chains. Cleavage and activation takes place when CFB is already associated with complement C3b.

It is found in the secreted. Its subcellular location is the cell surface. The enzyme catalyses Cleavage of Arg-|-Ser bond in complement component C3 alpha-chain to yield C3a and C3b, and Arg-|-Xaa bond in complement component C5 alpha-chain to yield C5a and C5b.. In terms of biological role, precursor of the catalytic component of the C3 and C5 convertase complexes of the alternative pathway of the complement system, a cascade of proteins that leads to phagocytosis and breakdown of pathogens and signaling that strengthens the adaptive immune system. The alternative complement pathway acts as an amplification loop that enhances other complement pathways (classical, lectin and GZMK) by promoting formation of additional C3 and C5 convertases. CFB is cleaved and activated by CFD to generate Ba and Bb chains; Bb chain constituting the catalytic component of the C3 and C5 convertases. Functionally, serine protease component of the complement C3 and C5 convertase complexes of the alternative complement pathway. Following cleavage and activation by factor D (CFD), forms the C3 convertase together with complement C3b. As part of the C3 convertase, cleaves and activates C3 into C3a anaphylatoxin and C3b opsonin, the next components of the complement pathways. When an additional complement C3b molecule binds to the C3 convertase, forms the C5 convertase, which cleaves and activates C5 into C5a anaphylatoxin and C5b component of the membrane attack complex. Its function is as follows. Involved in proliferation and differentiation of preactivated B-lymphocytes, rapid spreading of peripheral blood monocytes, stimulation of lymphocyte blastogenesis and lysis of erythrocytes. This Sus scrofa (Pig) protein is Complement factor B (CFB).